Consider the following 160-residue polypeptide: Putative pre-16S rRNA nuclease (160 aa).

This sequence belongs to the YqgF nuclease family.

The protein localises to the cytoplasm. In terms of biological role, could be a nuclease involved in processing of the 5'-end of pre-16S rRNA. This Cereibacter sphaeroides (strain ATCC 17025 / ATH 2.4.3) (Rhodobacter sphaeroides) protein is Putative pre-16S rRNA nuclease.